Reading from the N-terminus, the 61-residue chain is Protein translocase subunit SecE (61 aa).

Residues 39-59 (LGILVIGLVGMLIRIIGILML) traverse the membrane as a helical segment.

It belongs to the SecE/SEC61-gamma family. In terms of assembly, component of the Sec protein translocase complex. Heterotrimer consisting of SecY (alpha), SecG (beta) and SecE (gamma) subunits. The heterotrimers can form oligomers, although 1 heterotrimer is thought to be able to translocate proteins. Interacts with the ribosome. May interact with SecDF, and other proteins may be involved.

It is found in the cell membrane. Essential subunit of the Sec protein translocation channel SecYEG. Clamps together the 2 halves of SecY. May contact the channel plug during translocation. This Pyrococcus horikoshii (strain ATCC 700860 / DSM 12428 / JCM 9974 / NBRC 100139 / OT-3) protein is Protein translocase subunit SecE.